A 437-amino-acid chain; its full sequence is Beta-1,3-galactosyl-O-glycosyl-glycoprotein beta-1,6-N-acetylglucosaminyltransferase 3 (437 aa).

The Cytoplasmic segment spans residues 1 to 12 (MTSWQRLCWHYR). Residues 13 to 30 (LWTLGCYMLLAILALKLS) traverse the membrane as a helical; Signal-anchor for type II membrane protein segment. Topologically, residues 31–437 (LRLKCDFDAM…RHKAIYGTEL (407 aa)) are lumenal. 4 disulfides stabilise this stretch: C70–C227, C161–C381, C182–C209, and C390–C422. Residue N288 is glycosylated (N-linked (GlcNAc...) asparagine).

Belongs to the glycosyltransferase 14 family. Post-translationally, N-glycosylated.

Its subcellular location is the golgi apparatus membrane. The catalysed reaction is a 3-O-[beta-D-galactosyl-(1-&gt;3)-N-acetyl-alpha-D-galactosaminyl]-L-seryl-[protein] + UDP-N-acetyl-alpha-D-glucosamine = 3-O-{beta-D-galactosyl-(1-&gt;3)-[N-acetyl-beta-D-glucosaminyl-(1-&gt;6)]-N-acetyl-alpha-D-galactosaminyl}-L-seryl-[protein] + UDP + H(+). The enzyme catalyses a 3-O-[beta-D-galactosyl-(1-&gt;3)-N-acetyl-alpha-D-galactosaminyl]-L-threonyl-[protein] + UDP-N-acetyl-alpha-D-glucosamine = a 3-O-{beta-D-galactosyl-(1-&gt;3)-[N-acetyl-beta-D-glucosaminyl-(1-&gt;6)]-N-acetyl-alpha-D-galactosaminyl}-L-threonyl-[protein] + UDP + H(+). It carries out the reaction a beta-D-Gal-(1-&gt;4)-beta-D-GlcNAc-(1-&gt;3)-beta-D-Gal-(1-&gt;4)-beta-D-GlcNAc derivative + UDP-N-acetyl-alpha-D-glucosamine = a beta-D-Gal-(1-&gt;4)-beta-D-GlcNAc-(1-&gt;3)-[beta-D-GlcNAc-(1-&gt;6)]-beta-D-Gal-(1-&gt;4)-N-acetyl-beta-D-glucosaminyl derivative + UDP + H(+). It catalyses the reaction 3-O-[N-acetyl-beta-D-glucosaminyl-(1-&gt;3)-N-acetyl-alpha-D-galactosaminyl]-L-seryl-[protein] + UDP-N-acetyl-alpha-D-glucosamine = 3-O-[N-acetyl-beta-D-glucosaminyl-(1-&gt;3)-[N-acetyl-beta-D-glucosaminyl-(1-&gt;6)]-N-acetyl-alpha-D-galactosaminyl]-L-seryl-[protein] + UDP + H(+). The catalysed reaction is a 3-O-[N-acetyl-beta-D-glucosaminyl-(1-&gt;3)-N-acetyl-alpha-D-galactosaminyl]-L-threonyl-[protein] + UDP-N-acetyl-alpha-D-glucosamine = 3-O-[N-acetyl-beta-D-glucosaminyl-(1-&gt;3)-[N-acetyl-beta-D-glucosaminyl-(1-&gt;6)]-N-acetyl-alpha-D-galactosaminyl]-L-threonyl-[protein] + UDP + H(+). It functions in the pathway protein modification; protein glycosylation. In terms of biological role, glycosyltransferase that can synthesize all known mucin beta 6 N-acetylglucosaminides. Mediates core 2 and core 4 O-glycan branching, 2 important steps in mucin-type biosynthesis. Also has I-branching enzyme activity by converting linear into branched poly-N-acetyllactosaminoglycans, leading to introduce the blood group I antigen during embryonic development. This chain is Beta-1,3-galactosyl-O-glycosyl-glycoprotein beta-1,6-N-acetylglucosaminyltransferase 3 (Gcnt3), found in Mus musculus (Mouse).